The following is a 209-amino-acid chain: MEGGGGSGNKTTGGLAGFFGAGGAGYSHADLAGVPLTGMNPLSPYLNVDPRYLVQDTDEFILPTGANKTRGRFELAFFTIGGCCMTGAAFGAMNGLRLGLKETQNMAWSKPRNVQILNMVTRQGALWANTLGSLALLYSAFGVIIEKTRGAEDDLNTVAAGTMTGMLYKCTGGLRGAARGGLAGLTLTGLYALYNNWEHMKGSVLQQSL.

A run of 3 helical transmembrane segments spans residues 73–93 (FELAFFTIGGCCMTGAAFGAM), 125–145 (ALWANTLGSLALLYSAFGVII), and 172–194 (GGLRGAARGGLAGLTLTGLYALY).

It belongs to the Tim17/Tim22/Tim23 family. As to quaternary structure, component of the TIM23 complex at least composed of TIMM23, TIMM17 (TIMM17A or TIMM17B) and TIMM50; within this complex, directly interacts with TIMM50. The complex interacts with the TIMM44 component of the PAM complex and with DNAJC15. Upon mitochondrial depolarization, interacts with PINK1; the interaction is required for PINK1 accumulation at the outer mitochondrial membrane, kinase activation by autophosphorylation and PRKN recruitement to mitochondria.

The protein localises to the mitochondrion inner membrane. In terms of biological role, essential component of the TIM23 complex, a complex that mediates the translocation of transit peptide-containing proteins across the mitochondrial inner membrane. Has a role in the activation of stress-induced mitophagy by protecting PINK1 from OMA1-mediated degradation and facilitating its accumulation at the outer mitochondrial membrane in response to depolarization. In Bos taurus (Bovine), this protein is Mitochondrial import inner membrane translocase subunit Tim23 (TIMM23).